The sequence spans 348 residues: Protein pof5 (348 aa).

This sequence to yeast YDR306C. In terms of assembly, interacts with skp1.

The protein localises to the mitochondrion. The protein is Protein pof5 (pof5) of Schizosaccharomyces pombe (strain 972 / ATCC 24843) (Fission yeast).